Consider the following 308-residue polypeptide: Methionyl-tRNA formyltransferase (308 aa).

109-112 contacts (6S)-5,6,7,8-tetrahydrofolate; that stretch reads SLLP.

This sequence belongs to the Fmt family.

It catalyses the reaction L-methionyl-tRNA(fMet) + (6R)-10-formyltetrahydrofolate = N-formyl-L-methionyl-tRNA(fMet) + (6S)-5,6,7,8-tetrahydrofolate + H(+). Functionally, attaches a formyl group to the free amino group of methionyl-tRNA(fMet). The formyl group appears to play a dual role in the initiator identity of N-formylmethionyl-tRNA by promoting its recognition by IF2 and preventing the misappropriation of this tRNA by the elongation apparatus. The protein is Methionyl-tRNA formyltransferase of Phenylobacterium zucineum (strain HLK1).